The following is a 703-amino-acid chain: Serotransferrin (703 aa).

The first 19 residues, 1-19 (MDLSLHVALCLGMLALCLA), serve as a signal peptide directing secretion. Transferrin-like domains are found at residues 27–341 (VRWC…ALKE) and 354–686 (VRWC…SLNK). 2 disulfide bridges follow: Cys30–Cys65 and Cys40–Cys56. Asp80 and Tyr112 together coordinate Fe(3+). 3 disulfide bridges follow: Cys135-Cys218, Cys180-Cys193, and Cys246-Cys260. Residues Thr137, Lys141, Ala143, and Gly144 each contribute to the hydrogencarbonate site. Tyr212 serves as a coordination point for Fe(3+). Residue His268 participates in Fe(3+) binding. Positions 341–350 (EGVKEDDLAA) are connecting region. 2 disulfide bridges follow: Cys357–Cys389 and Cys367–Cys380. Asp404 and Tyr443 together coordinate Fe(3+). 7 cysteine pairs are disulfide-bonded: Cys414/Cys698, Cys432/Cys659, Cys466/Cys545, Cys490/Cys687, Cys500/Cys514, Cys511/Cys528, and Cys585/Cys599. Residues Thr468, Arg472, Ala474, and Gly475 each coordinate hydrogencarbonate. Residue Tyr539 participates in Fe(3+) binding. His607 is a binding site for Fe(3+).

The protein belongs to the transferrin family. Monomer. As to expression, plasma.

The protein resides in the secreted. In terms of biological role, transferrins are iron binding transport proteins which can bind two Fe(3+) ions in association with the binding of an anion, usually bicarbonate. It is responsible for the transport of iron from sites of absorption and heme degradation to those of storage and utilization. Serum transferrin may also have a further role in stimulating cell proliferation. This chain is Serotransferrin (tf), found in Xenopus tropicalis (Western clawed frog).